We begin with the raw amino-acid sequence, 107 residues long: U1-lycotoxin-Ls1k (107 aa).

Residues 1 to 20 (MMKVLVVVALLVTLISYSSS) form the signal peptide. The propeptide occupies 21 to 41 (EGIDDLEADELLSLMANEQTR). Disulfide bonds link Cys44-Cys59, Cys51-Cys68, Cys58-Cys86, and Cys70-Cys84.

The protein belongs to the neurotoxin 19 (CSTX) family. 04 (U1-Lctx) subfamily. As to expression, expressed by the venom gland.

The protein resides in the secreted. The polypeptide is U1-lycotoxin-Ls1k (Lycosa singoriensis (Wolf spider)).